We begin with the raw amino-acid sequence, 156 residues long: Small ribosomal subunit protein uS7 (156 aa).

The protein belongs to the universal ribosomal protein uS7 family. Part of the 30S ribosomal subunit. Contacts proteins S9 and S11.

In terms of biological role, one of the primary rRNA binding proteins, it binds directly to 16S rRNA where it nucleates assembly of the head domain of the 30S subunit. Is located at the subunit interface close to the decoding center, probably blocks exit of the E-site tRNA. In Syntrophotalea carbinolica (strain DSM 2380 / NBRC 103641 / GraBd1) (Pelobacter carbinolicus), this protein is Small ribosomal subunit protein uS7.